We begin with the raw amino-acid sequence, 291 residues long: MLEGQIIKALSGFYYVFSEGKVYQCRARGNFRKRNISPLVGDDVEFQIENKTDGYILDVMSRENALVRPPVANIDIAILVFSAVEPDFSTNLADRFLVAIEKEDIKPVICISKMDLASESEKEQIAVYKDIYEAIGYDVFVTNDEPDKEAIKDYISGKTAVIAGQSGVGKSTLLNSLNSDLTLKTAEISNALGRGKHTTRHVELMPIGDGFVADTPGFSSIEWDDLQPETLQFCFPEMEDRRSGCKFRGCMHDNEPNCAVKTAVEANEIAEFRYKHYIQILQELKNRKPRY.

The CP-type G domain maps to 63–221 (ENALVRPPVA…VADTPGFSSI (159 aa)). GTP-binding positions include 112–115 (SKMD) and 164–172 (GQSGVGKST). Zn(2+) is bound by residues Cys245, Cys250, His252, and Cys258.

This sequence belongs to the TRAFAC class YlqF/YawG GTPase family. RsgA subfamily. Monomer. Associates with 30S ribosomal subunit, binds 16S rRNA. Zn(2+) serves as cofactor.

It localises to the cytoplasm. One of several proteins that assist in the late maturation steps of the functional core of the 30S ribosomal subunit. Helps release RbfA from mature subunits. May play a role in the assembly of ribosomal proteins into the subunit. Circularly permuted GTPase that catalyzes slow GTP hydrolysis, GTPase activity is stimulated by the 30S ribosomal subunit. This Listeria monocytogenes serotype 4b (strain F2365) protein is Small ribosomal subunit biogenesis GTPase RsgA 1.